Consider the following 186-residue polypeptide: MIILLVGMPGSGKGEVAKAFRRRGIPVISMGDAIREEAEKRGIPKTPEGLKYVSLKVREELGPGAVAILTIPKVRGIIKRKGIVVIEGVRSPAEVQEFRREFKNERVIILAIHSPPKVRFERLRRRGRSDDPKTWNEFLDRDKKELGFGIGEVMSLADYVILNNCTFNEFQRKIEKVVSKILSNWP.

7–14 (GMPGSGKG) contacts ATP.

The protein belongs to the UPF0200 family.

The protein is UPF0200 protein PH1008 of Pyrococcus horikoshii (strain ATCC 700860 / DSM 12428 / JCM 9974 / NBRC 100139 / OT-3).